The sequence spans 514 residues: Major facilitator superfamily domain-containing protein 4A (514 aa).

Transmembrane regions (helical) follow at residues 19-39 (LTYW…GPTL), 53-73 (ISWV…LGGV), 82-102 (LWAL…IPFC), 107-127 (VLAS…TVAN), and 139-159 (AVFL…SPLI). A glycan (N-linked (GlcNAc...) asparagine) is linked at N177. Transmembrane regions (helical) follow at residues 221-241 (YAFW…LMLL), 307-327 (FFAI…LTGA), 347-367 (VAGY…LLSI), 376-396 (ATMV…LLIF), 400-420 (VVFL…TFPS), 438-458 (VLVT…GSIF), and 466-486 (FLVC…LLLF).

It belongs to the major facilitator superfamily.

Its subcellular location is the membrane. This is Major facilitator superfamily domain-containing protein 4A from Homo sapiens (Human).